Reading from the N-terminus, the 34-residue chain is Photosystem I reaction center subunit XII (34 aa).

The chain crosses the membrane as a helical span at residues 11-31 (VAIAFVVALIAGIAALLLSTA).

The protein belongs to the PsaM family. As to quaternary structure, the G.violaceus PSI reaction center is composed of one copy each of PsaA,B,C,D,E,F,L,M and Z, and forms trimeric complexes.

Its subcellular location is the cell inner membrane. The polypeptide is Photosystem I reaction center subunit XII (Gloeobacter violaceus (strain ATCC 29082 / PCC 7421)).